The sequence spans 86 residues: Putative regulatory protein Desal_2819 (86 aa).

This sequence belongs to the RemA family.

The polypeptide is Putative regulatory protein Desal_2819 (Maridesulfovibrio salexigens (strain ATCC 14822 / DSM 2638 / NCIMB 8403 / VKM B-1763) (Desulfovibrio salexigens)).